A 510-amino-acid polypeptide reads, in one-letter code: ATP synthase subunit alpha (510 aa).

Position 169–176 (169–176 (GDRQTGKT)) interacts with ATP.

This sequence belongs to the ATPase alpha/beta chains family. In terms of assembly, F-type ATPases have 2 components, CF(1) - the catalytic core - and CF(0) - the membrane proton channel. CF(1) has five subunits: alpha(3), beta(3), gamma(1), delta(1), epsilon(1). CF(0) has three main subunits: a(1), b(2) and c(9-12). The alpha and beta chains form an alternating ring which encloses part of the gamma chain. CF(1) is attached to CF(0) by a central stalk formed by the gamma and epsilon chains, while a peripheral stalk is formed by the delta and b chains.

Its subcellular location is the cell membrane. It carries out the reaction ATP + H2O + 4 H(+)(in) = ADP + phosphate + 5 H(+)(out). Functionally, produces ATP from ADP in the presence of a proton gradient across the membrane. The alpha chain is a regulatory subunit. In Buchnera aphidicola subsp. Schizaphis graminum (strain Sg), this protein is ATP synthase subunit alpha.